The sequence spans 500 residues: Cysteine-rich secretory protein LCCL domain-containing 1 (500 aa).

Residues 1 to 23 form the signal peptide; that stretch reads MMCKAQEWLRVTALLFVARAVPA. The SCP domain maps to 66–206; sequence LDLHNKLRSQ…PKAVYLVCNY (141 aa). Residues 258–281 form a disordered region; it reads EIERQQSQVHDTHVRTRSDDSDRN. 2 consecutive LCCL domains span residues 289-384 and 390-492; these read MSQI…ANSF and TVQA…TGGK. Disulfide bonds link cysteine 295-cysteine 313, cysteine 317-cysteine 337, cysteine 396-cysteine 418, and cysteine 422-cysteine 445.

The protein belongs to the CRISP family.

Its subcellular location is the secreted. This is Cysteine-rich secretory protein LCCL domain-containing 1 (Crispld1) from Mus musculus (Mouse).